A 192-amino-acid polypeptide reads, in one-letter code: Ion-translocating oxidoreductase complex subunit A (192 aa).

Transmembrane regions (helical) follow at residues 5 to 25 (LLLL…FLGL), 39 to 59 (IGMS…SYLV), 65 to 85 (LPFD…AVVV), 102 to 122 (ALGI…VALL), 134 to 154 (AIYG…FSAM), and 171 to 191 (AIAM…TGLV).

The protein belongs to the NqrDE/RnfAE family. In terms of assembly, the complex is composed of six subunits: RnfA, RnfB, RnfC, RnfD, RnfE and RnfG.

Its subcellular location is the cell inner membrane. Part of a membrane-bound complex that couples electron transfer with translocation of ions across the membrane. The chain is Ion-translocating oxidoreductase complex subunit A from Shewanella baltica (strain OS185).